The following is a 255-amino-acid chain: tRNA (guanine-N(1)-)-methyltransferase (255 aa).

Residues Gly-113 and 133–138 contribute to the S-adenosyl-L-methionine site; that span reads IGDYVL.

This sequence belongs to the RNA methyltransferase TrmD family. As to quaternary structure, homodimer.

The protein resides in the cytoplasm. It carries out the reaction guanosine(37) in tRNA + S-adenosyl-L-methionine = N(1)-methylguanosine(37) in tRNA + S-adenosyl-L-homocysteine + H(+). Specifically methylates guanosine-37 in various tRNAs. In Escherichia coli O6:K15:H31 (strain 536 / UPEC), this protein is tRNA (guanine-N(1)-)-methyltransferase.